The following is a 403-amino-acid chain: Phosphoserine phosphatase RsbP (403 aa).

Positions 1–42 (MDKQLNDAPCGFLALSEEGSIIAANRTLIKILDYEPEQVIGQ) constitute a PAS domain. Positions 191-402 (QVQIDSYYNA…DDECFILVDV (212 aa)) constitute a PPM-type phosphatase domain.

Mn(2+) is required as a cofactor.

The catalysed reaction is O-phospho-L-serine + H2O = L-serine + phosphate. It carries out the reaction O-phospho-D-serine + H2O = D-serine + phosphate. Functionally, positive regulator of sigma-B activity. Dephosphorylates RsbV in response to energy stress. The protein is Phosphoserine phosphatase RsbP (rsbP) of Bacillus subtilis (strain 168).